A 114-amino-acid chain; its full sequence is MDILLLLLVCLLTCGGQMLQKQAVVSWQRRPCNHWQKLRSPWLIASVAALGCGMLLWIYLLQRLPLSMAYPMLSINLVLVLVGSRLFFHEQISYHNWLGVGAIIVGALLLGGLL.

Transmembrane regions (helical) follow at residues 41 to 61, 64 to 84, and 94 to 114; these read PWLI…IYLL, LPLS…LVGS, and YHNW…GGLL. Residues 43–112 enclose the EamA domain; that stretch reads LIASVAALGC…IIVGALLLGG (70 aa).

The protein belongs to the ArnE family. In terms of assembly, heterodimer of ArnE and ArnF.

The protein resides in the cell inner membrane. It participates in bacterial outer membrane biogenesis; lipopolysaccharide biosynthesis. Functionally, translocates 4-amino-4-deoxy-L-arabinose-phosphoundecaprenol (alpha-L-Ara4N-phosphoundecaprenol) from the cytoplasmic to the periplasmic side of the inner membrane. The polypeptide is Probable 4-amino-4-deoxy-L-arabinose-phosphoundecaprenol flippase subunit ArnE (Aeromonas hydrophila subsp. hydrophila (strain ATCC 7966 / DSM 30187 / BCRC 13018 / CCUG 14551 / JCM 1027 / KCTC 2358 / NCIMB 9240 / NCTC 8049)).